A 570-amino-acid chain; its full sequence is 5-aminolevulinate synthase, mitochondrial (570 aa).

The N-terminal 53 residues, 1-53 (MESVIRSSAKICPFMHSATGSMQSVKALKNANLPAIAQQCPFMGKAMEQRRGY), are a transit peptide targeting the mitochondrion. Substrate-binding residues include arginine 119, serine 232, and lysine 251. 3 residues coordinate pyridoxal 5'-phosphate: serine 284, histidine 312, and threonine 356. Lysine 359 is a catalytic residue. Lysine 359 is modified (N6-(pyridoxal phosphate)lysine). 2 residues coordinate pyridoxal 5'-phosphate: threonine 388 and threonine 389. Threonine 474 serves as a coordination point for substrate.

The protein belongs to the class-II pyridoxal-phosphate-dependent aminotransferase family. In terms of assembly, homodimer. Pyridoxal 5'-phosphate is required as a cofactor.

Its subcellular location is the mitochondrion matrix. It carries out the reaction succinyl-CoA + glycine + H(+) = 5-aminolevulinate + CO2 + CoA. It participates in porphyrin-containing compound metabolism; protoporphyrin-IX biosynthesis; 5-aminolevulinate from glycine: step 1/1. Catalyzes the synthesis of 5-aminolevulinate (ALA) from succinyl-CoA and glycine, the first and rate-limiting step in heme biosynthesis. The protein is 5-aminolevulinate synthase, mitochondrial (HEM1) of Kluyveromyces lactis (strain ATCC 8585 / CBS 2359 / DSM 70799 / NBRC 1267 / NRRL Y-1140 / WM37) (Yeast).